The chain runs to 425 residues: CAAX prenyl protease 1 homolog (425 aa).

5 helical membrane passes run 3 to 23, 62 to 80, 109 to 129, 155 to 175, and 188 to 208; these read LPYL…ETYL, FHFI…ILYY, LAFL…FSLY, GILL…IIVQ, and FMFA…APLF. His-284 contacts Zn(2+). The active site involves Glu-285. Residue His-288 participates in Zn(2+) binding. Transmembrane regions (helical) follow at residues 295–315 and 332–352; these read VYSF…YTLV and VIIG…LLSF. Position 362 (Glu-362) interacts with Zn(2+). Asp-366 (proton donor) is an active-site residue.

It belongs to the peptidase M48A family. Requires Zn(2+) as cofactor.

It is found in the endoplasmic reticulum membrane. The catalysed reaction is Hydrolyzes the peptide bond -P2-(S-farnesyl or geranylgeranyl)C-P1'-P2'-P3'-COOH where P1' and P2' are amino acids with aliphatic side chains and P3' is any C-terminal residue.. Functionally, proteolytically removes the C-terminal three residues of farnesylated proteins. The sequence is that of CAAX prenyl protease 1 homolog (FACE1) from Oryza sativa subsp. japonica (Rice).